Here is a 97-residue protein sequence, read N- to C-terminus: Co-chaperonin GroES (97 aa).

It belongs to the GroES chaperonin family. As to quaternary structure, heptamer of 7 subunits arranged in a ring. Interacts with the chaperonin GroEL.

The protein resides in the cytoplasm. Functionally, together with the chaperonin GroEL, plays an essential role in assisting protein folding. The GroEL-GroES system forms a nano-cage that allows encapsulation of the non-native substrate proteins and provides a physical environment optimized to promote and accelerate protein folding. GroES binds to the apical surface of the GroEL ring, thereby capping the opening of the GroEL channel. In Klebsiella aerogenes (Enterobacter aerogenes), this protein is Co-chaperonin GroES.